The sequence spans 81 residues: Sulfur carrier protein TusA (81 aa).

Catalysis depends on Cys-19, which acts as the Cysteine persulfide intermediate.

Belongs to the sulfur carrier protein TusA family.

It is found in the cytoplasm. Functionally, sulfur carrier protein which probably makes part of a sulfur-relay system. This chain is Sulfur carrier protein TusA, found in Shewanella oneidensis (strain ATCC 700550 / JCM 31522 / CIP 106686 / LMG 19005 / NCIMB 14063 / MR-1).